The sequence spans 2172 residues: Non-reducing polyketide synthase dpfgA (2172 aa).

The tract at residues 74-181 is N-terminal acylcarrier protein transacylase domain (SAT); it reads EWIKCGNSSL…LALCVGALVD (108 aa). A Ketosynthase family 3 (KS3) domain is found at 389 to 783; sequence DDSIAIIGVS…GTNAAMLVCQ (395 aa). Residues Cys529, His665, and His706 each act as for beta-ketoacyl synthase activity in the active site. Positions 895–1197 are malonyl-CoA:ACP transacylase (MAT) domain; sequence VFAGQTGRQA…SFHSILLQGQ (303 aa). Ser981 acts as the For acyl/malonyl transferase activity in catalysis. Residues 1270–1403 are N-terminal hotdog fold; sequence PELVSLAGPT…GTINWQGQGC (134 aa). Positions 1270–1581 constitute a PKS/mFAS DH domain; sequence PELVSLAGPT…LKRIPIRSLQ (312 aa). The tract at residues 1277-1575 is product template (PT) domain; sequence GPTDGETVEF…EIIGASLKRI (299 aa). A C-terminal hotdog fold region spans residues 1428–1581; the sequence is SASTVQGLFV…LKRIPIRSLQ (154 aa). Disordered regions lie at residues 1608–1631 and 1650–1672; these read DSDS…HADF and YPMD…VLSD. Residues 1650–1668 are compositionally biased toward low complexity; sequence YPMDSSSFSSAQPPSSASS. Residues 1671–1747 enclose the Carrier domain; sequence SDHDQESTAL…DLYRMVLNHD (77 aa). The residue at position 1707 (Ser1707) is an O-(pantetheine 4'-phosphoryl)serine. The tract at residues 1751–1773 is disordered; the sequence is DRGSTVLSDKAPKSKSDSSLHGQ. The tract at residues 1975 to 2155 is methyltransferase (CMeT) domain; it reads EFLHRVLSRL…DAGFIHVDWT (181 aa).

The protein operates within secondary metabolite biosynthesis; terpenoid biosynthesis. In terms of biological role, non-reducing polyketide synthase; part of the gene cluster that mediates the biosynthesis of diterpenoid pyrones. The first step of the pathway is the synthesis of the alpha-pyrone moiety by the polyketide synthase dpfgA via condensation of one acetyl-CoA starter unit with 3 malonyl-CoA units and 2 methylations. The alpha-pyrone is then combined with geranylgeranyl pyrophosphate (GGPP) formed by the GGPP synthase dpfgD through the action of the prenyltransferase dpfgC to yield a linear alpha-pyrone diterpenoid. Subsequent steps in the diterpenoid pyrone biosynthetic pathway involve the decalin core formation, which is initiated by the epoxidation of the C10-C11 olefin by the FAD-dependent oxidoreductase dpfgE, and is followed by a cyclization cascade catalyzed by the terpene cyclase dpfgB. The short chain dehydrogenase/reductase dpfgG then oxidizes the 8S hydroxy group to a ketone and the short chain dehydrogenase/reductase dpfgH reduces the ketone to the 8R hydroxy group to yield higginsianin B. Higginsianin B is further methylated by the methyltransferase dpfgI to produce the intermediate named FDDP B. The cytochrome P450 monooxygenase dfgpJ then catalyzes a three-step oxidation at C-27 to generate a carboxylic acid as well as C-26 hydroxylation. Finally, methyltransferase dpfgK methylates the carboxylic acid generated by dpfgJ, yielding the final diterpenoid pyrones from the pathway which were named FDDP D and FDDP E. This is Non-reducing polyketide synthase dpfgA from Gibberella zeae (strain ATCC MYA-4620 / CBS 123657 / FGSC 9075 / NRRL 31084 / PH-1) (Wheat head blight fungus).